The sequence spans 323 residues: Elongation factor P--(R)-beta-lysine ligase (323 aa).

76–78 (SPE) serves as a coordination point for substrate. ATP contacts are provided by residues 100–102 (RNE) and asparagine 109. Tyrosine 118 contacts substrate. An ATP-binding site is contributed by 242–243 (EL). A substrate-binding site is contributed by glutamate 249. Glycine 298 is an ATP binding site.

It belongs to the class-II aminoacyl-tRNA synthetase family. EpmA subfamily. In terms of assembly, homodimer.

The catalysed reaction is D-beta-lysine + L-lysyl-[protein] + ATP = N(6)-((3R)-3,6-diaminohexanoyl)-L-lysyl-[protein] + AMP + diphosphate + H(+). With EpmB is involved in the beta-lysylation step of the post-translational modification of translation elongation factor P (EF-P). Catalyzes the ATP-dependent activation of (R)-beta-lysine produced by EpmB, forming a lysyl-adenylate, from which the beta-lysyl moiety is then transferred to the epsilon-amino group of a conserved specific lysine residue in EF-P. The polypeptide is Elongation factor P--(R)-beta-lysine ligase (Haemophilus influenzae (strain ATCC 51907 / DSM 11121 / KW20 / Rd)).